We begin with the raw amino-acid sequence, 500 residues long: Putative beta-glucosidase 5 (500 aa).

Positions 1–20 (MEQFFALFTIFLSFAFPGRC) are cleaved as a signal peptide. A beta-D-glucoside is bound by residues Gln43, His140, and 185 to 186 (NE). The active-site Proton donor is Glu186. A disulfide bridge connects residues Cys205 and Cys212. N-linked (GlcNAc...) asparagine glycosylation is present at Asn216. Residue Tyr328 coordinates a beta-D-glucoside. An N-linked (GlcNAc...) asparagine glycan is attached at Asn361. An a beta-D-glucoside-binding site is contributed by Glu394. The active-site Nucleophile is the Glu394. N-linked (GlcNAc...) asparagine glycosylation occurs at Asn424. Residues Trp434 and Tyr450 each coordinate a beta-D-glucoside. Asn456 and Asn495 each carry an N-linked (GlcNAc...) asparagine glycan.

Belongs to the glycosyl hydrolase 1 family.

The enzyme catalyses Hydrolysis of terminal, non-reducing beta-D-glucosyl residues with release of beta-D-glucose.. The chain is Putative beta-glucosidase 5 from Arabidopsis thaliana (Mouse-ear cress).